Here is a 96-residue protein sequence, read N- to C-terminus: Large ribosomal subunit protein eL21 (96 aa).

Positions 1-22 are disordered; sequence MRKSKGFKSRSRYKLKRSIRPK.

The protein belongs to the eukaryotic ribosomal protein eL21 family.

This Methanosphaera stadtmanae (strain ATCC 43021 / DSM 3091 / JCM 11832 / MCB-3) protein is Large ribosomal subunit protein eL21.